A 258-amino-acid chain; its full sequence is Diacetyl reductase [(S)-acetoin forming] (258 aa).

An NAD(+)-binding site is contributed by 8–32 (LVTGGAQGIGFKIAERLVEDGFKVA). Residue Ser-141 coordinates substrate. Catalysis depends on Tyr-154, which acts as the Proton acceptor. Lys-158 is a catalytic residue.

This sequence belongs to the short-chain dehydrogenases/reductases (SDR) family.

The enzyme catalyses (S)-acetoin + NAD(+) = diacetyl + NADH + H(+). Its function is as follows. Catalyzes the irreversible reduction of 2,3-butanediol to (S)-acetoin in the presence of NADH. This Staphylococcus aureus (strain Mu50 / ATCC 700699) protein is Diacetyl reductase [(S)-acetoin forming] (butA).